A 429-amino-acid polypeptide reads, in one-letter code: Glucose-1-phosphate adenylyltransferase (429 aa).

Alpha-D-glucose 1-phosphate contacts are provided by residues Tyr116, Gly181, 196–197 (EK), and Ser214.

The protein belongs to the bacterial/plant glucose-1-phosphate adenylyltransferase family. In terms of assembly, homotetramer.

The enzyme catalyses alpha-D-glucose 1-phosphate + ATP + H(+) = ADP-alpha-D-glucose + diphosphate. Its pathway is glycan biosynthesis; glycogen biosynthesis. Involved in the biosynthesis of ADP-glucose, a building block required for the elongation reactions to produce glycogen. Catalyzes the reaction between ATP and alpha-D-glucose 1-phosphate (G1P) to produce pyrophosphate and ADP-Glc. The sequence is that of Glucose-1-phosphate adenylyltransferase from Paramagnetospirillum magneticum (strain ATCC 700264 / AMB-1) (Magnetospirillum magneticum).